The following is an 846-amino-acid chain: Aminopeptidase N (846 aa).

Substrate-binding positions include glutamate 120 and 252–256; that span reads GAMEN. Residue histidine 288 participates in Zn(2+) binding. Residue glutamate 289 is the Proton acceptor of the active site. Zn(2+) contacts are provided by histidine 292 and glutamate 311.

Belongs to the peptidase M1 family. In terms of assembly, monomer. Zn(2+) serves as cofactor.

The protein resides in the cytoplasm. The enzyme catalyses Release of an N-terminal amino acid, Xaa-|-Yaa- from a peptide, amide or arylamide. Xaa is preferably Ala, but may be most amino acids including Pro (slow action). When a terminal hydrophobic residue is followed by a prolyl residue, the two may be released as an intact Xaa-Pro dipeptide.. Functionally, aminopeptidase with broad substrate specificity to several peptides. It has more affinity for oligopeptides than for dipeptides. It plays an essential role in the metabolism, it may be involved in nitrogen supply or protein turnover. This chain is Aminopeptidase N (pepN), found in Lactococcus lactis subsp. cremoris (Streptococcus cremoris).